The following is a 165-amino-acid chain: Immunity protein YokJ (165 aa).

In terms of assembly, probably interacts with cognate toxin YokI but not with other non-cognate toxins. The interaction inhibits the toxic activity of YokI.

It localises to the cytoplasm. Immunity component of one of 6 LXG toxin-immunity modules in this strain. They promote kin selection, mediate competition in biofilms, and drive spatial segregation of different strains, indicating that LXG toxins may help avoid warfare between strains in biofilms. Mediates intercellular competition during biofilm formation; disruption of the operon disadvantages the bacteria, but overexpression of the cognate immunity protein restores growth in competition with wild-type. In situ neutralizes the toxic effect of cognate toxin YokI. Neutralizes the ability to inhibit growth of cognate toxin YokI upon expression in E.coli. Does not have immunity protein activity on other LXG toxins. In Bacillus subtilis (strain 168), this protein is Immunity protein YokJ (yokJ).